The chain runs to 78 residues: Large ribosomal subunit protein bL28 (78 aa).

The disordered stretch occupies residues 1–25; the sequence is MSRVCQVTGKRPAVGNNRSHAKNAT.

Belongs to the bacterial ribosomal protein bL28 family.

This chain is Large ribosomal subunit protein bL28, found in Aliivibrio salmonicida (strain LFI1238) (Vibrio salmonicida (strain LFI1238)).